We begin with the raw amino-acid sequence, 314 residues long: Probable 5-dehydro-4-deoxyglucarate dehydratase (314 aa).

Belongs to the DapA family.

It carries out the reaction 5-dehydro-4-deoxy-D-glucarate + H(+) = 2,5-dioxopentanoate + CO2 + H2O. The protein operates within carbohydrate acid metabolism; D-glucarate degradation; 2,5-dioxopentanoate from D-glucarate: step 2/2. The sequence is that of Probable 5-dehydro-4-deoxyglucarate dehydratase from Bradyrhizobium diazoefficiens (strain JCM 10833 / BCRC 13528 / IAM 13628 / NBRC 14792 / USDA 110).